We begin with the raw amino-acid sequence, 262 residues long: Taurine import ATP-binding protein TauB (262 aa).

An ABC transporter domain is found at 4-233 (LELERISAQY…RYAAGESARA (230 aa)). ATP is bound at residue 38–45 (GPSGSGKT).

The protein belongs to the ABC transporter superfamily. Taurine importer (TC 3.A.1.17.1) family. In terms of assembly, the complex is composed of two ATP-binding proteins (TauB), two transmembrane proteins (TauC) and a solute-binding protein (TauA).

The protein localises to the cell inner membrane. The catalysed reaction is taurine(out) + ATP + H2O = taurine(in) + ADP + phosphate + H(+). Part of the ABC transporter complex TauABC involved in taurine import. Responsible for energy coupling to the transport system. This chain is Taurine import ATP-binding protein TauB, found in Pseudomonas putida (strain ATCC 47054 / DSM 6125 / CFBP 8728 / NCIMB 11950 / KT2440).